The primary structure comprises 242 residues: Ribose-5-phosphate isomerase A (242 aa).

Residues 39 to 42 (SGST), 95 to 98 (DGAD), and 108 to 111 (KGGG) each bind substrate. The Proton acceptor role is filled by Glu117. Lys135 serves as a coordination point for substrate.

It belongs to the ribose 5-phosphate isomerase family. Homodimer.

It carries out the reaction aldehydo-D-ribose 5-phosphate = D-ribulose 5-phosphate. Its pathway is carbohydrate degradation; pentose phosphate pathway; D-ribose 5-phosphate from D-ribulose 5-phosphate (non-oxidative stage): step 1/1. Its function is as follows. Catalyzes the reversible conversion of ribose-5-phosphate to ribulose 5-phosphate. The polypeptide is Ribose-5-phosphate isomerase A (Chlamydia trachomatis serovar D (strain ATCC VR-885 / DSM 19411 / UW-3/Cx)).